The sequence spans 267 residues: 4-hydroxy-tetrahydrodipicolinate reductase (267 aa).

NAD(+)-binding positions include 8-13 (GAAGRM) and D34. R35 contacts NADP(+). Residues 98 to 100 (GTT) and 122 to 125 (AANF) each bind NAD(+). Catalysis depends on H155, which acts as the Proton donor/acceptor. (S)-2,3,4,5-tetrahydrodipicolinate is bound at residue H156. K159 acts as the Proton donor in catalysis. 165-166 (GT) lines the (S)-2,3,4,5-tetrahydrodipicolinate pocket.

Belongs to the DapB family.

The protein localises to the cytoplasm. It catalyses the reaction (S)-2,3,4,5-tetrahydrodipicolinate + NAD(+) + H2O = (2S,4S)-4-hydroxy-2,3,4,5-tetrahydrodipicolinate + NADH + H(+). The enzyme catalyses (S)-2,3,4,5-tetrahydrodipicolinate + NADP(+) + H2O = (2S,4S)-4-hydroxy-2,3,4,5-tetrahydrodipicolinate + NADPH + H(+). Its pathway is amino-acid biosynthesis; L-lysine biosynthesis via DAP pathway; (S)-tetrahydrodipicolinate from L-aspartate: step 4/4. Functionally, catalyzes the conversion of 4-hydroxy-tetrahydrodipicolinate (HTPA) to tetrahydrodipicolinate. This is 4-hydroxy-tetrahydrodipicolinate reductase from Ectopseudomonas mendocina (strain ymp) (Pseudomonas mendocina).